Here is a 230-residue protein sequence, read N- to C-terminus: 5'-methylthioadenosine/S-adenosylhomocysteine nucleosidase (230 aa).

E12 acts as the Proton acceptor in catalysis. Substrate contacts are provided by residues G78, I153, and M174–E175. Catalysis depends on D198, which acts as the Proton donor.

This sequence belongs to the PNP/UDP phosphorylase family. MtnN subfamily.

It carries out the reaction S-adenosyl-L-homocysteine + H2O = S-(5-deoxy-D-ribos-5-yl)-L-homocysteine + adenine. The enzyme catalyses S-methyl-5'-thioadenosine + H2O = 5-(methylsulfanyl)-D-ribose + adenine. It catalyses the reaction 5'-deoxyadenosine + H2O = 5-deoxy-D-ribose + adenine. Its pathway is amino-acid biosynthesis; L-methionine biosynthesis via salvage pathway; S-methyl-5-thio-alpha-D-ribose 1-phosphate from S-methyl-5'-thioadenosine (hydrolase route): step 1/2. Functionally, catalyzes the irreversible cleavage of the glycosidic bond in both 5'-methylthioadenosine (MTA) and S-adenosylhomocysteine (SAH/AdoHcy) to adenine and the corresponding thioribose, 5'-methylthioribose and S-ribosylhomocysteine, respectively. Also cleaves 5'-deoxyadenosine, a toxic by-product of radical S-adenosylmethionine (SAM) enzymes, into 5-deoxyribose and adenine. The polypeptide is 5'-methylthioadenosine/S-adenosylhomocysteine nucleosidase (Shewanella sediminis (strain HAW-EB3)).